A 245-amino-acid chain; its full sequence is 1-(5-phosphoribosyl)-5-[(5-phosphoribosylamino)methylideneamino] imidazole-4-carboxamide isomerase (245 aa).

D7 functions as the Proton acceptor in the catalytic mechanism. Residue D129 is the Proton donor of the active site.

It belongs to the HisA/HisF family.

The protein localises to the cytoplasm. The enzyme catalyses 1-(5-phospho-beta-D-ribosyl)-5-[(5-phospho-beta-D-ribosylamino)methylideneamino]imidazole-4-carboxamide = 5-[(5-phospho-1-deoxy-D-ribulos-1-ylimino)methylamino]-1-(5-phospho-beta-D-ribosyl)imidazole-4-carboxamide. It functions in the pathway amino-acid biosynthesis; L-histidine biosynthesis; L-histidine from 5-phospho-alpha-D-ribose 1-diphosphate: step 4/9. This Aliivibrio fischeri (strain MJ11) (Vibrio fischeri) protein is 1-(5-phosphoribosyl)-5-[(5-phosphoribosylamino)methylideneamino] imidazole-4-carboxamide isomerase.